We begin with the raw amino-acid sequence, 562 residues long: MQTLDETSNLLPPPEEAEAPPLEQKFHEYNLALPKFPILFSLWLGSFLSSLDSTIVANIMNRVAEEFSESSKKQWIATSFLLTNTAFQPLYGKLSDITGRKSALLTAQFFFGLGCLLTCFARNVTEFSIARAICGIGAGGLNAISSIAVSDICTARERGVYQGYANIVFGFGQLLGAPLGGVFIETIGWRALFGIQVPVIMLCSVLAIKNINIKLFHVPPMKERYTLKNLSRIDIFGSLSLVATISGVLFLCSSQLNKLYLALFTIGSFIVFILVERYYATEKILPFELLTRSFCLSSAVTVISSFVVFGEIFRSPIYLQLLQNISVTKTGLFLIFPSISVAVGSLVTGWVLRNTKINLAHCAYQIIFGGMIMQLLGLGLGYFLLSHLNPDYTIYDMLESITFRSNSIWWKLIYVFASVLVSFGYACLLVATLVSIVFTVEKSQQGTMTGVFYLWRSIGNVLGASLTLVSYENSLSSMLWNYMFKTKRDDEYHFTKKQYYSLINDSSYLRGPNFPTDIFVRILDVYKKAFLISYIPNIALAAVGIVLSLYLVKHTYKRSSSS.

The Vacuolar portion of the chain corresponds to 1 to 30; that stretch reads MQTLDETSNLLPPPEEAEAPPLEQKFHEYN. The chain crosses the membrane as a helical span at residues 31–51; sequence LALPKFPILFSLWLGSFLSSL. The Cytoplasmic portion of the chain corresponds to 52–100; that stretch reads DSTIVANIMNRVAEEFSESSKKQWIATSFLLTNTAFQPLYGKLSDITGR. Residues 101 to 121 form a helical membrane-spanning segment; that stretch reads KSALLTAQFFFGLGCLLTCFA. Residues 122–131 are Vacuolar-facing; the sequence is RNVTEFSIAR. Asn-123 carries an N-linked (GlcNAc...) asparagine glycan. A helical transmembrane segment spans residues 132 to 152; it reads AICGIGAGGLNAISSIAVSDI. Residues 153–166 lie on the Cytoplasmic side of the membrane; sequence CTARERGVYQGYAN. The chain crosses the membrane as a helical span at residues 167 to 187; that stretch reads IVFGFGQLLGAPLGGVFIETI. Topologically, residues 188–190 are vacuolar; sequence GWR. A helical transmembrane segment spans residues 191-211; it reads ALFGIQVPVIMLCSVLAIKNI. Over 212–232 the chain is Cytoplasmic; it reads NIKLFHVPPMKERYTLKNLSR. A helical membrane pass occupies residues 233-253; that stretch reads IDIFGSLSLVATISGVLFLCS. The Vacuolar segment spans residues 254-255; that stretch reads SQ. A helical transmembrane segment spans residues 256 to 276; the sequence is LNKLYLALFTIGSFIVFILVE. Residues 277 to 292 lie on the Cytoplasmic side of the membrane; that stretch reads RYYATEKILPFELLTR. A helical transmembrane segment spans residues 293-313; sequence SFCLSSAVTVISSFVVFGEIF. Residues 314–331 are Vacuolar-facing; sequence RSPIYLQLLQNISVTKTG. Asn-324 carries an N-linked (GlcNAc...) asparagine glycan. The chain crosses the membrane as a helical span at residues 332-352; that stretch reads LFLIFPSISVAVGSLVTGWVL. Residues 353–365 lie on the Cytoplasmic side of the membrane; sequence RNTKINLAHCAYQ. A helical transmembrane segment spans residues 366–386; the sequence is IIFGGMIMQLLGLGLGYFLLS. The Vacuolar portion of the chain corresponds to 387-419; that stretch reads HLNPDYTIYDMLESITFRSNSIWWKLIYVFASV. A helical membrane pass occupies residues 420 to 440; that stretch reads LVSFGYACLLVATLVSIVFTV. Residues 441-448 are Cytoplasmic-facing; sequence EKSQQGTM. The chain crosses the membrane as a helical span at residues 449-469; that stretch reads TGVFYLWRSIGNVLGASLTLV. The Vacuolar segment spans residues 470–528; the sequence is SYENSLSSMLWNYMFKTKRDDEYHFTKKQYYSLINDSSYLRGPNFPTDIFVRILDVYKK. Asn-504 carries an N-linked (GlcNAc...) asparagine glycan. A helical transmembrane segment spans residues 529–549; it reads AFLISYIPNIALAAVGIVLSL. Residues 550–562 lie on the Cytoplasmic side of the membrane; the sequence is YLVKHTYKRSSSS.

The protein belongs to the major facilitator superfamily.

It localises to the vacuole membrane. In terms of biological role, transporter required for vacuolar uptake of at least histidine and lysine. This chain is Vacuolar basic amino acid transporter 1 (VBA1), found in Saccharomyces cerevisiae (strain ATCC 204508 / S288c) (Baker's yeast).